Consider the following 186-residue polypeptide: Peptide deformylase (186 aa).

Fe cation-binding residues include C113 and H156. Residue E157 is part of the active site. Position 160 (H160) interacts with Fe cation.

Belongs to the polypeptide deformylase family. The cofactor is Fe(2+).

It catalyses the reaction N-terminal N-formyl-L-methionyl-[peptide] + H2O = N-terminal L-methionyl-[peptide] + formate. Functionally, removes the formyl group from the N-terminal Met of newly synthesized proteins. Requires at least a dipeptide for an efficient rate of reaction. N-terminal L-methionine is a prerequisite for activity but the enzyme has broad specificity at other positions. The chain is Peptide deformylase from Limosilactobacillus reuteri (strain DSM 20016) (Lactobacillus reuteri).